A 938-amino-acid polypeptide reads, in one-letter code: Isoleucine--tRNA ligase (938 aa).

The 'HIGH' region signature appears at 58-68 (PYANGSIHIGH). Residue E561 coordinates L-isoleucyl-5'-AMP. The short motif at 602–606 (KMSKS) is the 'KMSKS' region element. An ATP-binding site is contributed by K605. Residues C901, C904, C921, and C924 each coordinate Zn(2+).

The protein belongs to the class-I aminoacyl-tRNA synthetase family. IleS type 1 subfamily. In terms of assembly, monomer. The cofactor is Zn(2+).

The protein resides in the cytoplasm. The catalysed reaction is tRNA(Ile) + L-isoleucine + ATP = L-isoleucyl-tRNA(Ile) + AMP + diphosphate. Its function is as follows. Catalyzes the attachment of isoleucine to tRNA(Ile). As IleRS can inadvertently accommodate and process structurally similar amino acids such as valine, to avoid such errors it has two additional distinct tRNA(Ile)-dependent editing activities. One activity is designated as 'pretransfer' editing and involves the hydrolysis of activated Val-AMP. The other activity is designated 'posttransfer' editing and involves deacylation of mischarged Val-tRNA(Ile). The polypeptide is Isoleucine--tRNA ligase (Klebsiella pneumoniae (strain 342)).